The following is a 278-amino-acid chain: Non-heme chloroperoxidase (278 aa).

An AB hydrolase-1 domain is found at 26–264; the sequence is PVVLIHGFPL…GAPHGLLWTH (239 aa). Active-site residues include Ser99, Asp229, and His258.

This sequence belongs to the AB hydrolase superfamily. Bacterial non-heme haloperoxidase / perhydrolase family. As to quaternary structure, homodimer.

The chain is Non-heme chloroperoxidase (cpo) from Kitasatospora aureofaciens (Streptomyces aureofaciens).